The following is a 121-amino-acid chain: MMSMVEIPEGKLIPAIAQDWKTGEVLMLAYINSIALSKTLETGVAHYWSRSRGKLWRKGESSGNEQIVKEILVDCDEDAILLKVEQKGGACHTGYRSCFYRTLDGRIVGKRIFDPDEVYKR.

Residue D74 coordinates Mg(2+). Zn(2+) is bound at residue C75. The Mg(2+) site is built by D76 and D78. Positions 91 and 98 each coordinate Zn(2+).

It belongs to the PRA-CH family. As to quaternary structure, homodimer. It depends on Mg(2+) as a cofactor. Zn(2+) serves as cofactor.

Its subcellular location is the cytoplasm. It catalyses the reaction 1-(5-phospho-beta-D-ribosyl)-5'-AMP + H2O = 1-(5-phospho-beta-D-ribosyl)-5-[(5-phospho-beta-D-ribosylamino)methylideneamino]imidazole-4-carboxamide. It functions in the pathway amino-acid biosynthesis; L-histidine biosynthesis; L-histidine from 5-phospho-alpha-D-ribose 1-diphosphate: step 3/9. In terms of biological role, catalyzes the hydrolysis of the adenine ring of phosphoribosyl-AMP. This chain is Phosphoribosyl-AMP cyclohydrolase, found in Methanothrix thermoacetophila (strain DSM 6194 / JCM 14653 / NBRC 101360 / PT) (Methanosaeta thermophila).